The primary structure comprises 296 residues: Light-independent protochlorophyllide reductase iron-sulfur ATP-binding protein (296 aa).

Residues 39–44 (GIGKST) and lysine 68 contribute to the ATP site. Serine 43 contacts Mg(2+). [4Fe-4S] cluster is bound by residues cysteine 124 and cysteine 158. 209 to 210 (NR) provides a ligand contact to ATP.

The protein belongs to the NifH/BchL/ChlL family. In terms of assembly, homodimer. Protochlorophyllide reductase is composed of three subunits; ChlL, ChlN and ChlB. The cofactor is [4Fe-4S] cluster.

The enzyme catalyses chlorophyllide a + oxidized 2[4Fe-4S]-[ferredoxin] + 2 ADP + 2 phosphate = protochlorophyllide a + reduced 2[4Fe-4S]-[ferredoxin] + 2 ATP + 2 H2O. It functions in the pathway porphyrin-containing compound metabolism; chlorophyll biosynthesis (light-independent). Functionally, component of the dark-operative protochlorophyllide reductase (DPOR) that uses Mg-ATP and reduced ferredoxin to reduce ring D of protochlorophyllide (Pchlide) to form chlorophyllide a (Chlide). This reaction is light-independent. The L component serves as a unique electron donor to the NB-component of the complex, and binds Mg-ATP. This Synechococcus sp. (strain CC9605) protein is Light-independent protochlorophyllide reductase iron-sulfur ATP-binding protein.